Reading from the N-terminus, the 570-residue chain is Rqc2 homolog RqcH (570 aa).

An NFACT-N domain region spans residues 1–173 (MSFDGMFTYG…LPPAQDKISP (173 aa)). The segment at 179 to 281 (DDILRHLSFQ…ELLDRFYFGK (103 aa)) is hhH domain. Coiled-coil stretches lie at residues 279 to 336 (FGKA…TANL) and 368 to 430 (TPSE…VEGK). The coiled-coil-M (CCM) stretch occupies residues 282-434 (AERDRVKQQA…ELVEGKYLRP (153 aa)). Residues 446–570 (HNPVLETYES…ADTVIKLKKS (125 aa)) are NFACT-R.

Belongs to the NEMF family. As to quaternary structure, associates with isolated or stalled 50S ribosomal subunits. Binds to RqcP. Interacts with ribosomal protein uL11. Displaced from the 50S subunit by thiostrepton. In crystallized 50S subunits RqcH is variously associated with A/P-site tRNA, P-site tRNA and RqcP, an E-site tRNA or A- and P-site tRNAs and RqcP2(YlmH).

Functionally, key component of the ribosome quality control system (RQC), a ribosome-associated complex that mediates the extraction of incompletely synthesized nascent chains from stalled ribosomes and their subsequent degradation. RqcH recruits Ala-charged tRNA, and with RqcP directs the elongation of stalled nascent chains on 50S ribosomal subunits, leading to non-templated C-terminal alanine extensions (Ala tail). The Ala tail promotes nascent chain degradation. RqcH, RqcP and charged tRNA(Ala) are necessary and sufficient to add an Ala tail to a model stalled nascent peptide; does not add Val. Binds the P-site tRNA in 50S ribosomal subunit, unwinds the anticodon stem and interacts with the splayed anticodon. Selectively binds tRNA(Ala) isoacceptors, even in the absence of the 50S ribosomal subunit. Adds between 1 and at least 8 Ala residues to the nascent chain; detection of the Ala tail requires either deletion of clpP or its inhibition. Binds to 50S ribosomal subunits, at least 30% of which contain a P-site tRNA and thus are obstructed. This chain is Rqc2 homolog RqcH, found in Bacillus subtilis (strain 168).